The following is a 376-amino-acid chain: Copper-containing nitrite reductase (376 aa).

A signal peptide (tat-type signal) is located at residues 1-33; it reads MAEQMQISRRTILAGAALAGALAPVLATTSAWG. At glutamine 34 the chain carries Pyrrolidone carboxylic acid. 2 Plastocyanin-like domains span residues 34–211 and 212–376; these read QGAV…YDKI and YYVG…PSGT. Cu cation is bound by residues histidine 131, histidine 136, histidine 171, cysteine 172, histidine 181, methionine 186, and histidine 342.

This sequence belongs to the multicopper oxidase family. As to quaternary structure, homotrimer. Cu(2+) is required as a cofactor. Requires Cu(+) as cofactor. FAD serves as cofactor. Predicted to be exported by the Tat system. The position of the signal peptide cleavage has been experimentally proven.

It is found in the periplasm. It carries out the reaction nitric oxide + Fe(III)-[cytochrome c] + H2O = Fe(II)-[cytochrome c] + nitrite + 2 H(+). Its pathway is nitrogen metabolism; nitrate reduction (denitrification); dinitrogen from nitrate: step 2/4. This is Copper-containing nitrite reductase (nirK) from Alcaligenes faecalis.